The chain runs to 487 residues: Cobyric acid synthase (487 aa).

Residues 248-435 enclose the GATase cobBQ-type domain; it reads VLKVIVPVLP…LHGLFEGSQS (188 aa). Catalysis depends on Cys329, which acts as the Nucleophile. Residue His427 is part of the active site.

This sequence belongs to the CobB/CobQ family. CobQ subfamily.

It participates in cofactor biosynthesis; adenosylcobalamin biosynthesis. Functionally, catalyzes amidations at positions B, D, E, and G on adenosylcobyrinic A,C-diamide. NH(2) groups are provided by glutamine, and one molecule of ATP is hydrogenolyzed for each amidation. The protein is Cobyric acid synthase of Pseudomonas entomophila (strain L48).